We begin with the raw amino-acid sequence, 660 residues long: Bifunctional polymyxin resistance protein ArnA (660 aa).

The formyltransferase ArnAFT stretch occupies residues 1–304; it reads MKAIVFAYHD…EMGIVTDVRL (304 aa). Residue His-104 is the Proton donor; for formyltransferase activity of the active site. (6R)-10-formyltetrahydrofolate is bound by residues Arg-114 and 136-140; that span reads VKRPD. Residues 314 to 660 form a dehydrogenase ArnADH region; sequence RRTRVLILGV…RTTVQEGDGA (347 aa). Residues Asp-347 and 368–369 contribute to the NAD(+) site; that span reads DI. UDP-alpha-D-glucuronate contacts are provided by residues Ala-393, Tyr-398, and 432–433; that span reads TS. The active-site Proton acceptor; for decarboxylase activity is Glu-434. Residues Arg-460, Asn-492, 526 to 535, and Tyr-613 contribute to the UDP-alpha-D-glucuronate site; that span reads KLMDGGAQKR. Catalysis depends on Arg-619, which acts as the Proton donor; for decarboxylase activity.

The protein in the N-terminal section; belongs to the Fmt family. UDP-L-Ara4N formyltransferase subfamily. In the C-terminal section; belongs to the NAD(P)-dependent epimerase/dehydratase family. UDP-glucuronic acid decarboxylase subfamily. In terms of assembly, homohexamer, formed by a dimer of trimers.

It catalyses the reaction UDP-alpha-D-glucuronate + NAD(+) = UDP-beta-L-threo-pentopyranos-4-ulose + CO2 + NADH. The enzyme catalyses UDP-4-amino-4-deoxy-beta-L-arabinose + (6R)-10-formyltetrahydrofolate = UDP-4-deoxy-4-formamido-beta-L-arabinose + (6S)-5,6,7,8-tetrahydrofolate + H(+). Its pathway is nucleotide-sugar biosynthesis; UDP-4-deoxy-4-formamido-beta-L-arabinose biosynthesis; UDP-4-deoxy-4-formamido-beta-L-arabinose from UDP-alpha-D-glucuronate: step 1/3. It participates in nucleotide-sugar biosynthesis; UDP-4-deoxy-4-formamido-beta-L-arabinose biosynthesis; UDP-4-deoxy-4-formamido-beta-L-arabinose from UDP-alpha-D-glucuronate: step 3/3. It functions in the pathway bacterial outer membrane biogenesis; lipopolysaccharide biosynthesis. In terms of biological role, bifunctional enzyme that catalyzes the oxidative decarboxylation of UDP-glucuronic acid (UDP-GlcUA) to UDP-4-keto-arabinose (UDP-Ara4O) and the addition of a formyl group to UDP-4-amino-4-deoxy-L-arabinose (UDP-L-Ara4N) to form UDP-L-4-formamido-arabinose (UDP-L-Ara4FN). The modified arabinose is attached to lipid A and is required for resistance to polymyxin and cationic antimicrobial peptides. The protein is Bifunctional polymyxin resistance protein ArnA of Serratia proteamaculans (strain 568).